The primary structure comprises 660 residues: 1-deoxy-D-xylulose-5-phosphate synthase (660 aa).

Thiamine diphosphate contacts are provided by residues H86 and 127–129 (AHS). Residue D164 participates in Mg(2+) binding. Thiamine diphosphate-binding positions include 165–166 (GS), N196, Y306, and E388. N196 provides a ligand contact to Mg(2+).

The protein belongs to the transketolase family. DXPS subfamily. In terms of assembly, homodimer. Mg(2+) serves as cofactor. The cofactor is thiamine diphosphate.

The enzyme catalyses D-glyceraldehyde 3-phosphate + pyruvate + H(+) = 1-deoxy-D-xylulose 5-phosphate + CO2. Its pathway is metabolic intermediate biosynthesis; 1-deoxy-D-xylulose 5-phosphate biosynthesis; 1-deoxy-D-xylulose 5-phosphate from D-glyceraldehyde 3-phosphate and pyruvate: step 1/1. In terms of biological role, catalyzes the acyloin condensation reaction between C atoms 2 and 3 of pyruvate and glyceraldehyde 3-phosphate to yield 1-deoxy-D-xylulose-5-phosphate (DXP). This chain is 1-deoxy-D-xylulose-5-phosphate synthase, found in Gluconobacter oxydans (strain 621H) (Gluconobacter suboxydans).